The primary structure comprises 242 residues: 1-(5-phosphoribosyl)-5-[(5-phosphoribosylamino)methylideneamino] imidazole-4-carboxamide isomerase (242 aa).

The active-site Proton acceptor is the Asp8. The Proton donor role is filled by Asp129.

Belongs to the HisA/HisF family.

It is found in the cytoplasm. The enzyme catalyses 1-(5-phospho-beta-D-ribosyl)-5-[(5-phospho-beta-D-ribosylamino)methylideneamino]imidazole-4-carboxamide = 5-[(5-phospho-1-deoxy-D-ribulos-1-ylimino)methylamino]-1-(5-phospho-beta-D-ribosyl)imidazole-4-carboxamide. Its pathway is amino-acid biosynthesis; L-histidine biosynthesis; L-histidine from 5-phospho-alpha-D-ribose 1-diphosphate: step 4/9. In Clostridium botulinum (strain ATCC 19397 / Type A), this protein is 1-(5-phosphoribosyl)-5-[(5-phosphoribosylamino)methylideneamino] imidazole-4-carboxamide isomerase.